Here is a 314-residue protein sequence, read N- to C-terminus: Methionyl-tRNA formyltransferase (314 aa).

Residue 110–113 participates in (6S)-5,6,7,8-tetrahydrofolate binding; that stretch reads SLLP.

Belongs to the Fmt family.

The catalysed reaction is L-methionyl-tRNA(fMet) + (6R)-10-formyltetrahydrofolate = N-formyl-L-methionyl-tRNA(fMet) + (6S)-5,6,7,8-tetrahydrofolate + H(+). In terms of biological role, attaches a formyl group to the free amino group of methionyl-tRNA(fMet). The formyl group appears to play a dual role in the initiator identity of N-formylmethionyl-tRNA by promoting its recognition by IF2 and preventing the misappropriation of this tRNA by the elongation apparatus. The sequence is that of Methionyl-tRNA formyltransferase from Levilactobacillus brevis (strain ATCC 367 / BCRC 12310 / CIP 105137 / JCM 1170 / LMG 11437 / NCIMB 947 / NCTC 947) (Lactobacillus brevis).